A 191-amino-acid chain; its full sequence is Leucyl/phenylalanyl-tRNA--protein transferase (191 aa).

This sequence belongs to the L/F-transferase family.

Its subcellular location is the cytoplasm. The catalysed reaction is N-terminal L-lysyl-[protein] + L-leucyl-tRNA(Leu) = N-terminal L-leucyl-L-lysyl-[protein] + tRNA(Leu) + H(+). It catalyses the reaction N-terminal L-arginyl-[protein] + L-leucyl-tRNA(Leu) = N-terminal L-leucyl-L-arginyl-[protein] + tRNA(Leu) + H(+). It carries out the reaction L-phenylalanyl-tRNA(Phe) + an N-terminal L-alpha-aminoacyl-[protein] = an N-terminal L-phenylalanyl-L-alpha-aminoacyl-[protein] + tRNA(Phe). Its function is as follows. Functions in the N-end rule pathway of protein degradation where it conjugates Leu, Phe and, less efficiently, Met from aminoacyl-tRNAs to the N-termini of proteins containing an N-terminal arginine or lysine. This chain is Leucyl/phenylalanyl-tRNA--protein transferase, found in Trichormus variabilis (strain ATCC 29413 / PCC 7937) (Anabaena variabilis).